The sequence spans 556 residues: Urocanate hydratase (556 aa).

Residues 52–53, Gln130, 176–178, Glu196, Arg201, 242–243, 263–267, 273–274, and Tyr322 contribute to the NAD(+) site; these read GG, GMG, NA, QTSAH, and YL. Cys410 is an active-site residue. Gly492 is a binding site for NAD(+).

The protein belongs to the urocanase family. The cofactor is NAD(+).

Its subcellular location is the cytoplasm. It carries out the reaction 4-imidazolone-5-propanoate = trans-urocanate + H2O. The protein operates within amino-acid degradation; L-histidine degradation into L-glutamate; N-formimidoyl-L-glutamate from L-histidine: step 2/3. Functionally, catalyzes the conversion of urocanate to 4-imidazolone-5-propionate. In Bradyrhizobium sp. (strain ORS 278), this protein is Urocanate hydratase.